Consider the following 169-residue polypeptide: Probable NADH dehydrogenase [ubiquinone] 1 alpha subcomplex subunit 5, mitochondrial (169 aa).

The transit peptide at 1–11 (MFLRAIGRPLL) directs the protein to the mitochondrion.

This sequence belongs to the complex I NDUFA5 subunit family. As to quaternary structure, complex I is composed of at least 49 different subunits.

Its subcellular location is the mitochondrion inner membrane. In terms of biological role, accessory subunit of the mitochondrial membrane respiratory chain NADH dehydrogenase (Complex I), that is believed not to be involved in catalysis. Complex I functions in the transfer of electrons from NADH to the respiratory chain. The immediate electron acceptor for the enzyme is believed to be ubiquinone. The sequence is that of Probable NADH dehydrogenase [ubiquinone] 1 alpha subcomplex subunit 5, mitochondrial from Arabidopsis thaliana (Mouse-ear cress).